The following is a 319-amino-acid chain: Ribonucleoside-diphosphate reductase small chain (319 aa).

3 residues coordinate Fe cation: D70, E101, and H104. Y108 is a catalytic residue. E163, E197, and H200 together coordinate Fe cation. Residues F313–F319 are interaction with R1.

It belongs to the ribonucleoside diphosphate reductase small chain family. In terms of assembly, interacts with RNR1/OPG080 subunit. Can interact with host RNR1 supunit. Fe cation is required as a cofactor.

It catalyses the reaction a 2'-deoxyribonucleoside 5'-diphosphate + [thioredoxin]-disulfide + H2O = a ribonucleoside 5'-diphosphate + [thioredoxin]-dithiol. Functionally, ribonucleoside-diphosphate reductase holoenzyme provides the precursors necessary for viral DNA synthesis. Allows virus growth in non-dividing cells. Catalyzes the biosynthesis of deoxyribonucleotides from the corresponding ribonucleotides. The polypeptide is Ribonucleoside-diphosphate reductase small chain (OPG048) (Vaccinia virus (strain Ankara) (VACV)).